The sequence spans 790 residues: Penicillin-binding protein 1A (790 aa).

Over 1–6 the chain is Cytoplasmic; it reads MYKSLF. Residues 7–27 form a helical; Signal-anchor for type II membrane protein membrane-spanning segment; it reads FCLKIFAVLILVGCGITAYII. At 28 to 790 the chain is on the periplasmic side; sequence YHYSRDLPDY…SKEDQSQEIY (763 aa). Positions 49–220 are transglycosylase; it reads TRIYSHDGKL…SELNPERNYA (172 aa). Glutamate 87 functions as the Proton donor; for transglycosylase activity in the catalytic mechanism. The transpeptidase stretch occupies residues 398–711; it reads DVIVVEPIKD…SNVVLPIFID (314 aa). Serine 457 acts as the Acyl-ester intermediate; for transpeptidase activity in catalysis.

The protein in the N-terminal section; belongs to the glycosyltransferase 51 family. It in the C-terminal section; belongs to the transpeptidase family.

The protein resides in the cell inner membrane. The catalysed reaction is [GlcNAc-(1-&gt;4)-Mur2Ac(oyl-L-Ala-gamma-D-Glu-L-Lys-D-Ala-D-Ala)](n)-di-trans,octa-cis-undecaprenyl diphosphate + beta-D-GlcNAc-(1-&gt;4)-Mur2Ac(oyl-L-Ala-gamma-D-Glu-L-Lys-D-Ala-D-Ala)-di-trans,octa-cis-undecaprenyl diphosphate = [GlcNAc-(1-&gt;4)-Mur2Ac(oyl-L-Ala-gamma-D-Glu-L-Lys-D-Ala-D-Ala)](n+1)-di-trans,octa-cis-undecaprenyl diphosphate + di-trans,octa-cis-undecaprenyl diphosphate + H(+). It catalyses the reaction Preferential cleavage: (Ac)2-L-Lys-D-Ala-|-D-Ala. Also transpeptidation of peptidyl-alanyl moieties that are N-acyl substituents of D-alanine.. The protein operates within cell wall biogenesis; peptidoglycan biosynthesis. Functionally, cell wall formation. Synthesis of cross-linked peptidoglycan from the lipid intermediates. The enzyme has a penicillin-insensitive transglycosylase N-terminal domain (formation of linear glycan strands) and a penicillin-sensitive transpeptidase C-terminal domain (cross-linking of the peptide subunits). This is Penicillin-binding protein 1A (mrcA) from Rickettsia felis (strain ATCC VR-1525 / URRWXCal2) (Rickettsia azadi).